The primary structure comprises 106 residues: Flagellar transcriptional regulator FlhD (106 aa).

It belongs to the FlhD family. Homodimer; disulfide-linked. Forms a heterohexamer composed of two FlhC and four FlhD subunits. Each FlhC binds a FlhD dimer, forming a heterotrimer, and a hexamer assembles by dimerization of two heterotrimers.

It localises to the cytoplasm. Functionally, functions in complex with FlhC as a master transcriptional regulator that regulates transcription of several flagellar and non-flagellar operons by binding to their promoter region. Activates expression of class 2 flagellar genes, including fliA, which is a flagellum-specific sigma factor that turns on the class 3 genes. Also regulates genes whose products function in a variety of physiological pathways. This Burkholderia pseudomallei (strain 1710b) protein is Flagellar transcriptional regulator FlhD.